Here is a 470-residue protein sequence, read N- to C-terminus: Glutamate--tRNA ligase (470 aa).

The short motif at 9 to 19 (PSPTGFLHVGG) is the 'HIGH' region element. A 'KMSKS' region motif is present at residues 236–240 (RLSKR). An ATP-binding site is contributed by K239.

This sequence belongs to the class-I aminoacyl-tRNA synthetase family. Glutamate--tRNA ligase type 1 subfamily. As to quaternary structure, monomer.

The protein resides in the cytoplasm. It carries out the reaction tRNA(Glu) + L-glutamate + ATP = L-glutamyl-tRNA(Glu) + AMP + diphosphate. Functionally, catalyzes the attachment of glutamate to tRNA(Glu) in a two-step reaction: glutamate is first activated by ATP to form Glu-AMP and then transferred to the acceptor end of tRNA(Glu). This chain is Glutamate--tRNA ligase, found in Legionella pneumophila (strain Lens).